Reading from the N-terminus, the 70-residue chain is Mu-conotoxin-like Am3.4 (70 aa).

The N-terminal stretch at 1-20 is a signal peptide; that stretch reads MMYKLGVLLIICLLLFPLTA. A propeptide spanning residues 21–53 is cleaved from the precursor; it reads VPQDGDQPADRPAERMQDDISFEHDRFFDPVKR. Disulfide bonds link cysteine 54–cysteine 69, cysteine 55–cysteine 65, and cysteine 61–cysteine 68. Proline 67 is modified (4-hydroxyproline; partial; in major form). Position 69 is a cysteine amide (cysteine 69).

This sequence belongs to the conotoxin M superfamily. Post-translationally, contains 3 disulfide bonds. Expressed by the venom duct.

It localises to the secreted. Functionally, mu-conotoxins block voltage-gated sodium channels (Nav). This Conus amadis (Amadis cone) protein is Mu-conotoxin-like Am3.4.